Here is a 361-residue protein sequence, read N- to C-terminus: MLYHVFYCLSSIFTPFNIFQYITFRAGGAILTSLLICFVAGPCIIEKLENFKIKQIVRTDGPETHLSKNGTPTMGGLLILLSVVASTFLWARLDNRFILWLLTGTLWLGFLGFCDDYLKLKKRDSNGLSAKSKIFGQTVFAAVLAAYLNFFPSNPEFATLVNVPFLKGFFINFSFLYALFVIIVIVGSSNAVNLTDGLDGLAIGNITIVAFSLTLFAYFAGHFQIANYLKIINVSGAGEISIFLFAVVGSSLGFLWYNSHPAEIFMGDTGSLFLGGVLGMVSLFIKQELVLVLLGGVFVIEALSVLIQIFYYRRTGKKVFKMSPLHHHYEMLGLSEMKVTVRFWIAGVILAILSFASLKVR.

10 consecutive transmembrane segments (helical) span residues 26–46 (AGGA…CIIE), 71–91 (TPTM…FLWA), 97–117 (FILW…CDDY), 134–154 (IFGQ…FPSN), 168–188 (GFFI…IVGS), 200–220 (GLAI…AYFA), 236–256 (GAGE…GFLW), 264–284 (IFMG…VSLF), 290–310 (VLVL…IQIF), and 338–358 (KVTV…FASL).

This sequence belongs to the glycosyltransferase 4 family. MraY subfamily. The cofactor is Mg(2+).

The protein localises to the cell membrane. It catalyses the reaction UDP-N-acetyl-alpha-D-muramoyl-L-alanyl-gamma-D-glutamyl-meso-2,6-diaminopimeloyl-D-alanyl-D-alanine + di-trans,octa-cis-undecaprenyl phosphate = di-trans,octa-cis-undecaprenyl diphospho-N-acetyl-alpha-D-muramoyl-L-alanyl-D-glutamyl-meso-2,6-diaminopimeloyl-D-alanyl-D-alanine + UMP. It functions in the pathway cell wall biogenesis; peptidoglycan biosynthesis. Functionally, catalyzes the initial step of the lipid cycle reactions in the biosynthesis of the cell wall peptidoglycan: transfers peptidoglycan precursor phospho-MurNAc-pentapeptide from UDP-MurNAc-pentapeptide onto the lipid carrier undecaprenyl phosphate, yielding undecaprenyl-pyrophosphoryl-MurNAc-pentapeptide, known as lipid I. The polypeptide is Phospho-N-acetylmuramoyl-pentapeptide-transferase (Endomicrobium trichonymphae).